The following is a 662-amino-acid chain: Acetyl-coenzyme A synthetase (662 aa).

Residues 197 to 200 (RKGK) and T317 contribute to the CoA site. ATP contacts are provided by residues 393 to 395 (GEP), 417 to 422 (DTWWQT), D510, and R525. Residue S533 coordinates CoA. An ATP-binding site is contributed by R536. Mg(2+)-binding residues include H549 and V552. An N6-acetyllysine modification is found at K623.

It belongs to the ATP-dependent AMP-binding enzyme family. Requires Mg(2+) as cofactor. In terms of processing, acetylated. Deacetylation by the SIR2-homolog deacetylase activates the enzyme.

It catalyses the reaction acetate + ATP + CoA = acetyl-CoA + AMP + diphosphate. Catalyzes the conversion of acetate into acetyl-CoA (AcCoA), an essential intermediate at the junction of anabolic and catabolic pathways. AcsA undergoes a two-step reaction. In the first half reaction, AcsA combines acetate with ATP to form acetyl-adenylate (AcAMP) intermediate. In the second half reaction, it can then transfer the acetyl group from AcAMP to the sulfhydryl group of CoA, forming the product AcCoA. The chain is Acetyl-coenzyme A synthetase from Helicobacter pylori (strain G27).